A 68-amino-acid polypeptide reads, in one-letter code: Beta-toxin Im-2 (68 aa).

The LCN-type CS-alpha/beta domain maps to 1 to 67 (KDGYPMVRAG…VWTYEKNTCK (67 aa)). 4 disulfides stabilise this stretch: Cys-15-Cys-66, Cys-19-Cys-40, Cys-26-Cys-47, and Cys-30-Cys-49.

This sequence belongs to the long (4 C-C) scorpion toxin superfamily. Sodium channel inhibitor family. Beta subfamily. Expressed by the venom gland.

It is found in the secreted. Beta toxins bind voltage-independently at site-4 of sodium channels (Nav) and shift the voltage of activation toward more negative potentials thereby affecting sodium channel activation and promoting spontaneous and repetitive firing. Is toxic to both insect and mammals. Induces paralysis in Acheta domestica crickets, but does not induce death, whereas intracerebroventricular injection into mice causes immediate death (at a dose of 0.05 ug/g). This is Beta-toxin Im-2 from Isometrus maculatus (Lesser brown scorpion).